Here is a 264-residue protein sequence, read N- to C-terminus: Small ribosomal subunit protein eS1 (264 aa).

The segment at 233–264 (GEGGGAGKPAGDETGAKVERADGYEPPVQESV) is disordered. Positions 242–255 (AGDETGAKVERADG) are enriched in basic and acidic residues.

This sequence belongs to the eukaryotic ribosomal protein eS1 family. As to quaternary structure, component of the small ribosomal subunit. Mature ribosomes consist of a small (40S) and a large (60S) subunit. The 40S subunit contains about 33 different proteins and 1 molecule of RNA (18S). The 60S subunit contains about 49 different proteins and 3 molecules of RNA (28S, 5.8S and 5S). Part of the small subunit (SSU) processome, composed of more than 70 proteins and the RNA chaperone small nucleolar RNA (snoRNA) U3.

The protein resides in the cytoplasm. Its subcellular location is the nucleus. It localises to the nucleolus. Its function is as follows. Component of the small ribosomal subunit. The ribosome is a large ribonucleoprotein complex responsible for the synthesis of proteins in the cell. Part of the small subunit (SSU) processome, first precursor of the small eukaryotic ribosomal subunit. During the assembly of the SSU processome in the nucleolus, many ribosome biogenesis factors, an RNA chaperone and ribosomal proteins associate with the nascent pre-rRNA and work in concert to generate RNA folding, modifications, rearrangements and cleavage as well as targeted degradation of pre-ribosomal RNA by the RNA exosome. May play a role during erythropoiesis. The chain is Small ribosomal subunit protein eS1 (rps3a) from Xenopus tropicalis (Western clawed frog).